Here is a 342-residue protein sequence, read N- to C-terminus: Protein-glutamate methylesterase/protein-glutamine glutaminase 4 (342 aa).

The Response regulatory domain occupies 2 to 119; sequence NIGIVNDLPL…GGSADPSQPL (118 aa). Asp53 is subject to 4-aspartylphosphate. Residues 144–337 form the CheB-type methylesterase domain; sequence PAPQGALPPL…DQLISLVQRN (194 aa). Catalysis depends on residues Ser159, His186, and Asp279.

The protein belongs to the CheB family. In terms of processing, phosphorylated by CheA. Phosphorylation of the N-terminal regulatory domain activates the methylesterase activity.

The protein localises to the cytoplasm. It carries out the reaction [protein]-L-glutamate 5-O-methyl ester + H2O = L-glutamyl-[protein] + methanol + H(+). The catalysed reaction is L-glutaminyl-[protein] + H2O = L-glutamyl-[protein] + NH4(+). Involved in chemotaxis. Part of a chemotaxis signal transduction system that modulates chemotaxis in response to various stimuli. Catalyzes the demethylation of specific methylglutamate residues introduced into the chemoreceptors (methyl-accepting chemotaxis proteins or MCP) by CheR. Also mediates the irreversible deamidation of specific glutamine residues to glutamic acid. The polypeptide is Protein-glutamate methylesterase/protein-glutamine glutaminase 4 (Burkholderia thailandensis (strain ATCC 700388 / DSM 13276 / CCUG 48851 / CIP 106301 / E264)).